The primary structure comprises 1111 residues: MAPATEADNNFDTHEWKSEFASTRSGRNSPNIFAKVRRKLLLTPPVRNARSPRLTEEELDALTGDLPYATNYTYAYSKIYDPSLPDHWEVPNLGGTTSGSLSEQEHWSAASLSRQLLYILRFPVYLVLHVITYILEAFYHVIKITSFTIWDYLLYLVKLAKTRYYAYQDHRRRTALIRNRQEPFSTKAARSIRRFFEILVYVVLTPYRMLTRSNNGVEQYQYRSIKDQLENERASRMTTRSQTLERSRKFDGLSKSPARRAAPAFVKTSTITRITAKVFSSSPFGEGTSENITPTVVTTRTVKQRSVTPRFRQTRATREAITRALDTPELEIDTPLSTYGLRSRGLSHLNTPEPTFDIGHAAATSTPLFPQETYNYQYEEATGNKIKTAFTWLGYLILFPFFAARHVWYTFYDYGKSAYMKLTNYQQAPMETIHVRDINEPAPSSSDVHDAVGVSWRIRIADFLSSFVATIVEAHQVVFAMFKGGIVETVSYFGGLFAGLTDKKSSKFSWCQILGLLLALLFAIFLLGFLTSDNTAIRVKEITKDKNASKKSEGSLPAVPIWISAANHVKHYTWMVKEFVVDIAFDTYNYGKSTIGRLGTTPRYAWDLIASGCGAVGNGLKSVLSSSFRFIDFCAGKLFYYGSDGFLSANKSIGTFFNGCYETLYNGCTAIVGHTKSFIYNASNAVYNFFSTIFAGLLNFSTSSQNSILSLLKSFGTGITNIFYNFIYAPIAGVFNFAGDNYMYFFNEVAAVFGKVYNSVVSVLKTVINWILFLIAYPFSLCTRAWIRISQYAPEDVVQVIPIPQAITPTPDVERIVEEPLRKVTDVEDEELVIIPAPAPKPIPVPAPTPAPVIIHQTNVVETVDKDAIIKEVTEKLRAELSAQFQQELSAKFEQNYNTIIEQLKMENTNIQYDKNHLEAIIRQMIYEYDTDKTGKVDYALESSGGAVVSTRCSETYKSYTRLEKFWDIPIYYFHYSPRVVIQRNSKSLFPGECWCFKESRGYIAVELSHFIDVSSISYEHIGSEVAPEGNRSSAPKGVLVWAYKQIDDLNSRVLIGDYTYDLDGPPLQFFLAKHKPDFPVKFVELEVTSNYGAPFTCLYRLRVHGKVVQV.

At 1–509 (MAPATEADNN…LTDKKSSKFS (509 aa)) the chain is on the nuclear side. Required for nuclear envelope localization stretches follow at residues 118–244 (YILR…SQTL) and 503–507 (KKSSK). Positions 232–253 (ERASRMTTRSQTLERSRKFDGL) are disordered. Basic and acidic residues predominate over residues 243-252 (TLERSRKFDG). A helical membrane pass occupies residues 510–530 (WCQILGLLLALLFAIFLLGFL). The Perinuclear space portion of the chain corresponds to 531–1111 (TSDNTAIRVK…LRVHGKVVQV (581 aa)). An interaction with zyg-12 region spans residues 912-1111 (QYDKNHLEAI…LRVHGKVVQV (200 aa)). The SUN domain occupies 945 to 1109 (GGAVVSTRCS…YRLRVHGKVV (165 aa)).

As to quaternary structure, component of the unc-83-unc-84 LINC complex which contains at least unc-83 and unc-84. Within the unc-83-unc-84 LINC complex interacts (via C-terminus) with unc-83; the interaction is probably required to recruit unc-83 to the nuclear membrane. Most likely interacts with anc-1; the interaction is probably required to recruit anc-1 to the nuclear envelope. Interacts (via C-terminus) with zyg-12 (via C-terminus); the interaction is direct. May interact with lmn-1; this interaction may be required to complete the connection between the nuclear lamina and the cytoskeleton. In terms of tissue distribution, expressed in all somatic cells. Not expressed in germ cells in the mitotic and transition zones of the gonad. One study shows expression at the beginning of the late pachytene stage in the proximal gonad, but there is no expression in the male germline, suggesting expression is specific to oogenesis in hermaphrodites.

It localises to the nucleus inner membrane. The protein resides in the cytoplasm. Its subcellular location is the cytoskeleton. Involved in nuclear migration and anchoring in hypodermal precursor cells. Most likely recruits anc-1 to the nuclear envelope where anc-1 functions to tether the nucleus to the actin cytoskeleton. Component of the unc-83-unc-84 LINC (LInker of Nucleoskeleton and Cytoskeleton) complex where it recruits and interacts with unc-83 to form a bridge connecting the nuclear envelope to the cytoskeleton which allows for nuclear transport along microtubules. Its role in nuclear migration may be in association with lamin, lmn-1. Regulates nuclear migrations in one-cell embryos, controlling the posterior migration of the male pronucleus following fertilization. Not required for centrosome attachment to the nucleus. Plays a role in the maintenance of the nuclear envelope architecture in body wall muscle cells. May be involved in DNA damage repair through an association with zyg-12. Potentially has roles in homologous recombination, double strand break repair and meiotic recombination. Specifically, may in part inhibit non-homologous end joining repair, most likely through recruiting fan-1 to the nucleoplasm, to facilitate the repair of DNA cross-links. The sequence is that of Nuclear migration and anchoring protein unc-84 from Caenorhabditis elegans.